The chain runs to 727 residues: Glycerol-3-phosphate dehydrogenase, mitochondrial (727 aa).

Residues Met1–Ala42 constitute a mitochondrion transit peptide. Asp71 to Glu99 provides a ligand contact to FAD. The residue at position 601 (Tyr601) is a Phosphotyrosine. EF-hand domains follow at residues Ser623–Lys658 and Ile659–Gly694. 5 residues coordinate Ca(2+): Asp672, Asn674, Asn676, Gln678, and Glu683.

Belongs to the FAD-dependent glycerol-3-phosphate dehydrogenase family. FAD is required as a cofactor.

It localises to the mitochondrion. It catalyses the reaction a quinone + sn-glycerol 3-phosphate = dihydroxyacetone phosphate + a quinol. Its pathway is polyol metabolism; glycerol degradation via glycerol kinase pathway; glycerone phosphate from sn-glycerol 3-phosphate (aerobic route): step 1/1. Its activity is regulated as follows. Calcium-binding enhance the activity of the enzyme. Calcium-responsive mitochondrial glycerol-3-phosphate dehydrogenase which seems to be a key component of the pancreatic beta-cell glucose-sensing device. In Mesocricetus auratus (Golden hamster), this protein is Glycerol-3-phosphate dehydrogenase, mitochondrial (GPD2).